The chain runs to 703 residues: Centrosomal protein of 63 kDa (703 aa).

The residue at position 1 (M1) is an N-acetylmethionine. Coiled coils occupy residues 22-199, 242-306, 353-533, and 676-703; these read EAEL…ESVE, MTVL…QHAV, LEGS…STQM, and HILE…TALK. A Phosphoserine modification is found at S278.

The protein belongs to the CEP63 family. Interacts with CEP152 and CDK1; these interactions recruit both ligands to centrosomes. Interacts with CDK2, CDK5RAP2, WDR62, CEP90, KIAA0753/moonraker and CCDC14. CEP63, CDK5RAP2, CEP152, WDR62 are proposed to form a stepwise assembled complex at the centrosome forming a ring near parental centrioles. Interacts with CCDC57; the interaction is required for their location to proximal end of centrioles. Interacts with FXR1; promoting its stabilization. As to quaternary structure, (Microbial infection) Interacts with zika virus serine protease NS3; this interaction disorganizes the centrosome. Polyubiquitinated via 'Lys-48'-linked ubiquitin, leading to its degradation. Deubiquitinated by USP36, promoting its stabilization.

Its subcellular location is the cytoplasm. It is found in the cytoskeleton. It localises to the microtubule organizing center. The protein resides in the centrosome. The protein localises to the centriole. Its subcellular location is the centriolar satellite. Functionally, required for normal spindle assembly. Plays a key role in mother-centriole-dependent centriole duplication; the function seems also to involve CEP152, CDK5RAP2 and WDR62 through a stepwise assembled complex at the centrosome that recruits CDK2 required for centriole duplication. Reported to be required for centrosomal recruitment of CEP152; however, this function has been questioned. Also recruits CDK1 to centrosomes. Plays a role in DNA damage response. Following DNA damage, such as double-strand breaks (DSBs), is removed from centrosomes; this leads to the inactivation of spindle assembly and delay in mitotic progression. Promotes stabilization of FXR1 protein by inhibiting FXR1 ubiquitination. This chain is Centrosomal protein of 63 kDa, found in Homo sapiens (Human).